A 431-amino-acid chain; its full sequence is Serine hydroxymethyltransferase (431 aa).

Residues L128 and 132–134 each bind (6S)-5,6,7,8-tetrahydrofolate; that span reads GHL. K237 carries the N6-(pyridoxal phosphate)lysine modification.

This sequence belongs to the SHMT family. Homodimer. The cofactor is pyridoxal 5'-phosphate.

The protein resides in the cytoplasm. The catalysed reaction is (6R)-5,10-methylene-5,6,7,8-tetrahydrofolate + glycine + H2O = (6S)-5,6,7,8-tetrahydrofolate + L-serine. It participates in one-carbon metabolism; tetrahydrofolate interconversion. Its pathway is amino-acid biosynthesis; glycine biosynthesis; glycine from L-serine: step 1/1. Functionally, catalyzes the reversible interconversion of serine and glycine with tetrahydrofolate (THF) serving as the one-carbon carrier. This reaction serves as the major source of one-carbon groups required for the biosynthesis of purines, thymidylate, methionine, and other important biomolecules. Also exhibits THF-independent aldolase activity toward beta-hydroxyamino acids, producing glycine and aldehydes, via a retro-aldol mechanism. This chain is Serine hydroxymethyltransferase, found in Ruegeria sp. (strain TM1040) (Silicibacter sp.).